Here is a 478-residue protein sequence, read N- to C-terminus: Putative UDP-glucose flavonoid 3-O-glucosyltransferase 3 (478 aa).

The protein belongs to the UDP-glycosyltransferase family.

The polypeptide is Putative UDP-glucose flavonoid 3-O-glucosyltransferase 3 (Fragaria ananassa (Strawberry)).